The following is an 815-amino-acid chain: DNA topoisomerase 1 (815 aa).

Positions Lys3–Pro119 constitute a Toprim domain. Residues Glu9 and Asp82 each coordinate Mg(2+). In terms of domain architecture, Topo IA-type catalytic spans Ala133–Val573. An interaction with DNA region spans residues Ser167–Gln172. Tyr308 (O-(5'-phospho-DNA)-tyrosine intermediate) is an active-site residue. Residues Thr759–Gln815 are disordered. Positions Thr774–Val801 are enriched in basic and acidic residues.

It belongs to the type IA topoisomerase family. As to quaternary structure, monomer. Mg(2+) is required as a cofactor.

The catalysed reaction is ATP-independent breakage of single-stranded DNA, followed by passage and rejoining.. Its function is as follows. Releases the supercoiling and torsional tension of DNA, which is introduced during the DNA replication and transcription, by transiently cleaving and rejoining one strand of the DNA duplex. Introduces a single-strand break via transesterification at a target site in duplex DNA. The scissile phosphodiester is attacked by the catalytic tyrosine of the enzyme, resulting in the formation of a DNA-(5'-phosphotyrosyl)-enzyme intermediate and the expulsion of a 3'-OH DNA strand. The free DNA strand then undergoes passage around the unbroken strand, thus removing DNA supercoils. Finally, in the religation step, the DNA 3'-OH attacks the covalent intermediate to expel the active-site tyrosine and restore the DNA phosphodiester backbone. This chain is DNA topoisomerase 1, found in Xylella fastidiosa (strain Temecula1 / ATCC 700964).